The primary structure comprises 175 residues: ATP-dependent protease subunit HslV (175 aa).

Residue T2 is part of the active site. Na(+) contacts are provided by G158, C161, and T164.

Belongs to the peptidase T1B family. HslV subfamily. A double ring-shaped homohexamer of HslV is capped on each side by a ring-shaped HslU homohexamer. The assembly of the HslU/HslV complex is dependent on binding of ATP.

It is found in the cytoplasm. It carries out the reaction ATP-dependent cleavage of peptide bonds with broad specificity.. Allosterically activated by HslU binding. Its function is as follows. Protease subunit of a proteasome-like degradation complex believed to be a general protein degrading machinery. The protein is ATP-dependent protease subunit HslV of Haemophilus influenzae (strain 86-028NP).